Consider the following 171-residue polypeptide: MKKIAFFVICVGFPSLIFASASIQESDFIQRVINFVIFVAILWYFAFDSIKGIFVNRRNAISARLQEVQENLHKAKREKETAQKRLEESKEKAKNIVNAAKQEAYLLEQKYNDQIKKDIETLKYALESNIEFERRKITHEAVDELLNKLIQSDDVQLNKEDYVNIITKRIS.

A helical membrane pass occupies residues 4 to 24 (IAFFVICVGFPSLIFASASIQ).

It belongs to the ATPase B chain family. F-type ATPases have 2 components, F(1) - the catalytic core - and F(0) - the membrane proton channel. F(1) has five subunits: alpha(3), beta(3), gamma(1), delta(1), epsilon(1). F(0) has three main subunits: a(1), b(2) and c(10-14). The alpha and beta chains form an alternating ring which encloses part of the gamma chain. F(1) is attached to F(0) by a central stalk formed by the gamma and epsilon chains, while a peripheral stalk is formed by the delta and b chains.

The protein localises to the cell inner membrane. Functionally, f(1)F(0) ATP synthase produces ATP from ADP in the presence of a proton or sodium gradient. F-type ATPases consist of two structural domains, F(1) containing the extramembraneous catalytic core and F(0) containing the membrane proton channel, linked together by a central stalk and a peripheral stalk. During catalysis, ATP synthesis in the catalytic domain of F(1) is coupled via a rotary mechanism of the central stalk subunits to proton translocation. Component of the F(0) channel, it forms part of the peripheral stalk, linking F(1) to F(0). The polypeptide is ATP synthase subunit b (Helicobacter hepaticus (strain ATCC 51449 / 3B1)).